Reading from the N-terminus, the 159-residue chain is SsrA-binding protein (159 aa).

The interval 138-159 (KRDTLKDKDWQRQKERMMKHSV) is disordered.

It belongs to the SmpB family.

It localises to the cytoplasm. Required for rescue of stalled ribosomes mediated by trans-translation. Binds to transfer-messenger RNA (tmRNA), required for stable association of tmRNA with ribosomes. tmRNA and SmpB together mimic tRNA shape, replacing the anticodon stem-loop with SmpB. tmRNA is encoded by the ssrA gene; the 2 termini fold to resemble tRNA(Ala) and it encodes a 'tag peptide', a short internal open reading frame. During trans-translation Ala-aminoacylated tmRNA acts like a tRNA, entering the A-site of stalled ribosomes, displacing the stalled mRNA. The ribosome then switches to translate the ORF on the tmRNA; the nascent peptide is terminated with the 'tag peptide' encoded by the tmRNA and targeted for degradation. The ribosome is freed to recommence translation, which seems to be the essential function of trans-translation. This is SsrA-binding protein from Alteromonas mediterranea (strain DSM 17117 / CIP 110805 / LMG 28347 / Deep ecotype).